A 204-amino-acid chain; its full sequence is Holliday junction branch migration complex subunit RuvA (204 aa).

Residues 1–67 (MIDYLYGTLD…GGVISLYGFF (67 aa)) are domain I. Positions 68 to 149 (TIEEREMYLL…TVNVLNKEKQ (82 aa)) are domain II. The flexible linker stretch occupies residues 150 to 154 (TGAET). The segment at 155-204 (IKNTMVSEAIAGLITLGYKMQQARVAVTNVYEHNENITLEDLIKKSLQYL) is domain III.

This sequence belongs to the RuvA family. In terms of assembly, homotetramer. Forms an RuvA(8)-RuvB(12)-Holliday junction (HJ) complex. HJ DNA is sandwiched between 2 RuvA tetramers; dsDNA enters through RuvA and exits via RuvB. An RuvB hexamer assembles on each DNA strand where it exits the tetramer. Each RuvB hexamer is contacted by two RuvA subunits (via domain III) on 2 adjacent RuvB subunits; this complex drives branch migration. In the full resolvosome a probable DNA-RuvA(4)-RuvB(12)-RuvC(2) complex forms which resolves the HJ.

It localises to the cytoplasm. Functionally, the RuvA-RuvB-RuvC complex processes Holliday junction (HJ) DNA during genetic recombination and DNA repair, while the RuvA-RuvB complex plays an important role in the rescue of blocked DNA replication forks via replication fork reversal (RFR). RuvA specifically binds to HJ cruciform DNA, conferring on it an open structure. The RuvB hexamer acts as an ATP-dependent pump, pulling dsDNA into and through the RuvAB complex. HJ branch migration allows RuvC to scan DNA until it finds its consensus sequence, where it cleaves and resolves the cruciform DNA. The protein is Holliday junction branch migration complex subunit RuvA of Endomicrobium trichonymphae.